Here is an 856-residue protein sequence, read N- to C-terminus: DNA gyrase subunit A (856 aa).

In terms of domain architecture, Topo IIA-type catalytic spans 45 to 517 (LPDARDGLKP…DDGTVTHEDL (473 aa)). Tyrosine 133 serves as the catalytic O-(5'-phospho-DNA)-tyrosine intermediate. The GyrA-box motif lies at 544–550 (QHRGGKG). The tract at residues 822-856 (TVASVDTHPRTDDSSEADSGDGESESENATATTPS) is disordered. A compositionally biased stretch (acidic residues) spans 835-847 (SSEADSGDGESES).

Belongs to the type II topoisomerase GyrA/ParC subunit family. Heterotetramer, composed of two GyrA and two GyrB chains. In the heterotetramer, GyrA contains the active site tyrosine that forms a transient covalent intermediate with DNA, while GyrB binds cofactors and catalyzes ATP hydrolysis.

The protein resides in the cytoplasm. The catalysed reaction is ATP-dependent breakage, passage and rejoining of double-stranded DNA.. In terms of biological role, a type II topoisomerase that negatively supercoils closed circular double-stranded (ds) DNA in an ATP-dependent manner to modulate DNA topology and maintain chromosomes in an underwound state. Negative supercoiling favors strand separation, and DNA replication, transcription, recombination and repair, all of which involve strand separation. Also able to catalyze the interconversion of other topological isomers of dsDNA rings, including catenanes and knotted rings. Type II topoisomerases break and join 2 DNA strands simultaneously in an ATP-dependent manner. This chain is DNA gyrase subunit A, found in Haloquadratum walsbyi (strain DSM 16790 / HBSQ001).